Here is a 146-residue protein sequence, read N- to C-terminus: Gonadotropin subunit beta-2 (146 aa).

An N-terminal signal peptide occupies residues 1 to 28 (TGTPVKILVVRNILLLLFCLVVLLVFAQ). 6 disulfide bridges follow: cysteine 35/cysteine 83, cysteine 49/cysteine 98, cysteine 52/cysteine 136, cysteine 60/cysteine 114, cysteine 64/cysteine 116, and cysteine 119/cysteine 126. N-linked (GlcNAc...) asparagine glycosylation occurs at asparagine 39.

It belongs to the glycoprotein hormones subunit beta family. Heterodimer of an alpha and a beta chain.

It is found in the secreted. Its function is as follows. Involved in gametogenesis and steroidogenesis. The sequence is that of Gonadotropin subunit beta-2 (cgbb) from Ctenopharyngodon idella (Grass carp).